The following is a 430-amino-acid chain: Carbamoyl phosphate synthase small chain, chloroplastic (430 aa).

The N-terminal 35 residues, 1 to 35 (MAMATRTLGFVLPTSLSSQPSFDRRGGGFRVSVIR), are a transit peptide targeting the chloroplast. Residues 243–429 (KVIAYDFGIK…IELMKRSKQS (187 aa)) form the Glutamine amidotransferase type-1 domain. Cys-318 acts as the Nucleophile in catalysis. Catalysis depends on residues His-402 and Glu-404.

It belongs to the CarA family. In terms of assembly, heterodimer composed of 2 chains; the small (or glutamine) chain promotes the hydrolysis of glutamine to ammonia, which is used by the large (or ammonia) chain to synthesize carbamoyl phosphate.

The protein resides in the plastid. The protein localises to the chloroplast. It carries out the reaction hydrogencarbonate + L-glutamine + 2 ATP + H2O = carbamoyl phosphate + L-glutamate + 2 ADP + phosphate + 2 H(+). The enzyme catalyses L-glutamine + H2O = L-glutamate + NH4(+). Its pathway is amino-acid biosynthesis; L-arginine biosynthesis; carbamoyl phosphate from bicarbonate: step 1/1. The protein operates within pyrimidine metabolism; UMP biosynthesis via de novo pathway; (S)-dihydroorotate from bicarbonate: step 1/3. Its function is as follows. Small subunit of the arginine-specific carbamoyl phosphate synthase (CPSase). CPSase catalyzes the formation of carbamoyl phosphate from the ammonia moiety of glutamine, carbonate, and phosphate donated by ATP, the first step of the arginine biosynthetic pathway. The small subunit (glutamine amidotransferase) binds and cleaves glutamine to supply the large subunit with the substrate ammonia. In Arabidopsis thaliana (Mouse-ear cress), this protein is Carbamoyl phosphate synthase small chain, chloroplastic (CARA).